The following is a 204-amino-acid chain: Dephospho-CoA kinase (204 aa).

Positions Arg13 to Val204 constitute a DPCK domain. Ala21–Thr26 contacts ATP.

It belongs to the CoaE family.

The protein resides in the cytoplasm. The catalysed reaction is 3'-dephospho-CoA + ATP = ADP + CoA + H(+). It functions in the pathway cofactor biosynthesis; coenzyme A biosynthesis; CoA from (R)-pantothenate: step 5/5. Functionally, catalyzes the phosphorylation of the 3'-hydroxyl group of dephosphocoenzyme A to form coenzyme A. The polypeptide is Dephospho-CoA kinase (Prochlorococcus marinus subsp. pastoris (strain CCMP1986 / NIES-2087 / MED4)).